Reading from the N-terminus, the 167-residue chain is Epithelial membrane protein 2 (167 aa).

Residues 1–21 form a helical membrane-spanning segment; sequence MLVLLAFIIVFHITSAALLLV. Asn-44, Asn-47, and Asn-52 each carry an N-linked (GlcNAc...) asparagine glycan. 3 helical membrane passes run 67–87, 95–115, and 143–163; these read TMILSTILCCIAFLIFLLQLF, FVLTSIIQLMACLCVMIAASI, and FILAWVAFAFTFISGLMYLIL.

The protein belongs to the PMP-22/EMP/MP20 family. As to quaternary structure, interacts with PTK2; regulates PTK2 activation and localization. Interacts with ITGB3; regulates the levels of the heterodimer ITGA5-ITGB3 integrin surface expression. Interacts with P2RX7 (via C-terminus). Interacts with ITGB1; the interaction may be direct or indirect and ITGB1 has a heterodimer form.

Its subcellular location is the golgi apparatus membrane. The protein resides in the cell membrane. It localises to the apical cell membrane. The protein localises to the membrane raft. It is found in the cytoplasm. Its subcellular location is the nucleus. The protein resides in the perinuclear region. In terms of biological role, functions as a key regulator of cell membrane composition by regulating protein surface expression. Also, plays a role in regulation of processes including cell migration, cell proliferation, cell contraction and cell adhesion. Regulates transepithelial migration of neutrophils into the alveolar lumen, potentially via mediation of cell surface expression of adhesion markers and lipid raft formation. Negatively regulates caveolae formation by reducing CAV1 expression and CAV1 amount by increasing lysosomal degradation. Facilitates surface trafficking and the formation of lipid rafts bearing GPI-anchor proteins. Regulates surface expression of MHC1 and ICAM1 proteins increasing susceptibility to T-cell mediated cytotoxicity. Regulates the plasma membrane expression of the integrin heterodimers ITGA6-ITGB1, ITGA5-ITGB3 and ITGA5-ITGB1 resulting in modulation of cell-matrix adhesion. Also regulates many processes through PTK2. Regulates blood vessel endothelial cell migration and angiogenesis by regulating VEGF protein expression through PTK2 activation. Regulates cell migration and cell contraction through PTK2 and SRC activation. Regulates focal adhesion density, F-actin conformation and cell adhesion capacity through interaction with PTK2. Positively regulates cell proliferation. Plays a role during cell death and cell blebbing. Promotes angiogenesis and vasculogenesis through induction of VEGFA via a HIF1A-dependent pathway. Also plays a role in embryo implantation by regulating surface trafficking of integrin heterodimer ITGA5-ITGB3. Plays a role in placental angiogenesis and uterine natural killer cell regulation at the maternal-fetal placental interface, however not required in the maternal tissues for a viable pregnancy. Involved in the early stages of embryogenic development and cardiogenesis, potentially via regulation of epithelial-mesenchymal transition timing. May play a role in glomerular filtration. This is Epithelial membrane protein 2 (EMP2) from Bos taurus (Bovine).